Consider the following 737-residue polypeptide: Polyribonucleotide nucleotidyltransferase (737 aa).

The Mg(2+) site is built by D489 and D495. Residues P556–I615 form the KH domain. An S1 motif domain is found at D625–K693. Residues S691–E737 are disordered. A compositionally biased stretch (basic and acidic residues) spans P700 to P714. Basic residues predominate over residues H715–K724. The span at P725 to E737 shows a compositional bias: basic and acidic residues.

The protein belongs to the polyribonucleotide nucleotidyltransferase family. Mg(2+) is required as a cofactor.

It is found in the cytoplasm. The catalysed reaction is RNA(n+1) + phosphate = RNA(n) + a ribonucleoside 5'-diphosphate. Its function is as follows. Involved in mRNA degradation. Catalyzes the phosphorolysis of single-stranded polyribonucleotides processively in the 3'- to 5'-direction. The protein is Polyribonucleotide nucleotidyltransferase of Streptococcus pneumoniae (strain ATCC 700669 / Spain 23F-1).